Consider the following 869-residue polypeptide: Alanine--tRNA ligase (869 aa).

Zn(2+) is bound by residues His559, His563, Cys660, and His664.

Belongs to the class-II aminoacyl-tRNA synthetase family. Zn(2+) serves as cofactor.

The protein resides in the cytoplasm. It catalyses the reaction tRNA(Ala) + L-alanine + ATP = L-alanyl-tRNA(Ala) + AMP + diphosphate. Its function is as follows. Catalyzes the attachment of alanine to tRNA(Ala) in a two-step reaction: alanine is first activated by ATP to form Ala-AMP and then transferred to the acceptor end of tRNA(Ala). Also edits incorrectly charged Ser-tRNA(Ala) and Gly-tRNA(Ala) via its editing domain. The sequence is that of Alanine--tRNA ligase from Janthinobacterium sp. (strain Marseille) (Minibacterium massiliensis).